A 118-amino-acid polypeptide reads, in one-letter code: Integration host factor subunit alpha (118 aa).

The interval Asn97 to Gly118 is disordered.

This sequence belongs to the bacterial histone-like protein family. Heterodimer of an alpha and a beta chain.

This protein is one of the two subunits of integration host factor, a specific DNA-binding protein that functions in genetic recombination as well as in transcriptional and translational control. The protein is Integration host factor subunit alpha of Rhodopseudomonas palustris (strain ATCC BAA-98 / CGA009).